Here is a 420-residue protein sequence, read N- to C-terminus: MSDAIAKDAVNTSSEKEPVSATPELKTSGSPDAAVSSGDKKKKKKKKKTNNIKNIALLYPDEKYPEGEWMDYHQDFNLQRTTDEEKRYLTRDAENQQRWNDMRKGAEIHRRVRKNLQNKLKPDMTLTEVVNIVENATRKFTGVDENGDHVDRPKSQGVGFPTGVSLNHCAAHFTPNAGDQTVLRYEDVMKVDIGVQVNGYIVDSAWTVAFDPKYDNLLQAVREATNTGVREAGIDVRLTDIGEAIQEVMESYEVELNGKTHQVKPCRNLCGHNIAPYRIHGGKSVPIVKNGDQTKMEEGEHFAIETFGSTGRGFVVPGGEVSHYAKSAEADGLPAPSLSRAKSLLKTIDENFGTLPFCRRYLDRLGEDKYLFALNSLVKHGIVQDYPPLNDVQGSYTAQFEHTILLHPHRKEVVSRGEDY.

Residues 1 to 48 form a disordered region; it reads MSDAIAKDAVNTSSEKEPVSATPELKTSGSPDAAVSSGDKKKKKKKKK. Position 172 (His-172) interacts with substrate. The a divalent metal cation site is built by Asp-192, Asp-203, and His-272. A substrate-binding site is contributed by His-280. Residues Glu-305 and Glu-401 each contribute to the a divalent metal cation site.

It belongs to the peptidase M24A family. Methionine aminopeptidase eukaryotic type 2 subfamily. Co(2+) serves as cofactor. The cofactor is Zn(2+). Requires Mn(2+) as cofactor. Fe(2+) is required as a cofactor.

Its subcellular location is the cytoplasm. The enzyme catalyses Release of N-terminal amino acids, preferentially methionine, from peptides and arylamides.. Its function is as follows. Cotranslationally removes the N-terminal methionine from nascent proteins. The N-terminal methionine is often cleaved when the second residue in the primary sequence is small and uncharged (Met-Ala-, Cys, Gly, Pro, Ser, Thr, or Val). The polypeptide is Methionine aminopeptidase 2 (Lachancea thermotolerans (strain ATCC 56472 / CBS 6340 / NRRL Y-8284) (Yeast)).